The sequence spans 405 residues: Tryptophan synthase beta chain (405 aa).

Lys-98 carries the N6-(pyridoxal phosphate)lysine modification.

The protein belongs to the TrpB family. As to quaternary structure, tetramer of two alpha and two beta chains. It depends on pyridoxal 5'-phosphate as a cofactor.

It catalyses the reaction (1S,2R)-1-C-(indol-3-yl)glycerol 3-phosphate + L-serine = D-glyceraldehyde 3-phosphate + L-tryptophan + H2O. It functions in the pathway amino-acid biosynthesis; L-tryptophan biosynthesis; L-tryptophan from chorismate: step 5/5. The beta subunit is responsible for the synthesis of L-tryptophan from indole and L-serine. The chain is Tryptophan synthase beta chain from Methylococcus capsulatus (strain ATCC 33009 / NCIMB 11132 / Bath).